A 144-amino-acid polypeptide reads, in one-letter code: Augurin-B (144 aa).

The first 18 residues, 1 to 18 (MSLHSLCVPTILLISVLS), serve as a signal peptide directing secretion. The propeptide occupies 19–68 (ICLSSGGSSDSKLHRILIKRDAKEIESRPKAYISVQQSKAKEFLSGLHRT). The tract at residues 109–144 (RSNDQGRQHHHDENAPMSQQDPRYNRHGANVNYDYY) is disordered. The span at 112–122 (DQGRQHHHDEN) shows a compositional bias: basic and acidic residues.

The protein belongs to the augurin family.

The protein localises to the secreted. Its subcellular location is the cytoplasm. The protein resides in the apical cell membrane. Its function is as follows. Probable hormone. Required for the proper formation of the central nervous system by attenuating cell proliferation during development. This is Augurin-B from Danio rerio (Zebrafish).